Here is a 98-residue protein sequence, read N- to C-terminus: Small ribosomal subunit protein bS20 (98 aa).

Residues 1–12 are compositionally biased toward basic residues; the sequence is MAPRKPSKKVGP. The tract at residues 1–31 is disordered; it reads MAPRKPSKKVGPQKRPSAEKRVITSKKKQLR.

This sequence belongs to the bacterial ribosomal protein bS20 family.

In terms of biological role, binds directly to 16S ribosomal RNA. This chain is Small ribosomal subunit protein bS20, found in Chlamydia trachomatis serovar L2 (strain ATCC VR-902B / DSM 19102 / 434/Bu).